The following is a 555-amino-acid chain: Protein PLASTID TRANSCRIPTIONALLY ACTIVE 12, chloroplastic (555 aa).

A chloroplast-targeting transit peptide spans 1–58 (MASCYNPWRLFPGMSTAVPAGPVTAPAHSRTCKSSKVFSALPHRRGLLFLGTRRARIK). 3 disordered regions span residues 80–100 (YFDSTSGQLEPASGARASIPG), 115–167 (ARAP…EPDV), and 468–541 (SYNE…IDDS). The span at 144–154 (QVTSASGTEGA) shows a compositional bias: polar residues. Acidic residues-rich tracts occupy residues 471-480 (EDSDDEDEDV) and 490-502 (LEDEEDDRDDVAE). Over residues 508-519 (NQNWSALKSTGQ) the composition is skewed to polar residues. Residues 521 to 538 (EKPKEKSKKDEMTLKEAI) are compositionally biased toward basic and acidic residues.

As to quaternary structure, component of the plastid-encoded plastid RNA polymerase (PEP) complex.

Its subcellular location is the plastid. It is found in the chloroplast stroma. It localises to the nucleus. Its function is as follows. Required for the activity of the plastid-encoded RNA polymerase (PEP) and full expression of genes transcribed by PEP. Required for the proper build-up and formation of the PEP-complex. Binds single-stranded (ss) DNA and RNA, but not double-stranded (ds) DNA. The protein is Protein PLASTID TRANSCRIPTIONALLY ACTIVE 12, chloroplastic of Zea mays (Maize).